The sequence spans 191 residues: TATA-box-binding protein (191 aa).

Repeat copies occupy residues 18-94 and 108-185.

Belongs to the TBP family. In terms of assembly, belongs to the TFIID complex together with the TBP-associated factors (TAFs). Binds DNA as monomer.

It is found in the nucleus. Its function is as follows. General transcription factor that functions at the core of the DNA-binding multiprotein factor TFIID. Binding of TFIID to the TATA box is the initial transcriptional step of the pre-initiation complex (PIC), playing a role in the activation of eukaryotic genes transcribed by RNA polymerase II. This chain is TATA-box-binding protein, found in Acetabularia peniculus (Green alga).